The following is a 215-amino-acid chain: Coat protein (215 aa).

The tract at residues 1–34 (MATQNADVTDATDYKKPPAETEQKALTIQPRSNK) is disordered. The span at 12 to 23 (TDYKKPPAETEQ) shows a compositional bias: basic and acidic residues. Positions 24–34 (KALTIQPRSNK) are enriched in polar residues.

This sequence belongs to the potexvirus capsid protein family.

The protein resides in the virion. In terms of biological role, required for genome encapsidation. Forms ribonucleoprotein complexes along with TGB1 helicase and viral RNA. The chain is Coat protein from Setaria italica (Foxtail millet).